We begin with the raw amino-acid sequence, 100 residues long: Cell division topological specificity factor (100 aa).

The protein belongs to the MinE family.

Prevents the cell division inhibition by proteins MinC and MinD at internal division sites while permitting inhibition at polar sites. This ensures cell division at the proper site by restricting the formation of a division septum at the midpoint of the long axis of the cell. The protein is Cell division topological specificity factor of Blochmanniella floridana.